Reading from the N-terminus, the 563-residue chain is NAD(P)H-quinone oxidoreductase chain 4 (563 aa).

15 helical membrane-spanning segments follow: residues 25-45 (FPWL…VPFI), 56-76 (WFAL…YLYG), 90-110 (VSWL…ISMP), 111-131 (LILL…PVTF), 133-153 (PKLF…VFAV), 157-177 (LLFF…LAIW), 189-209 (FIIY…AMGF), 230-250 (GFQL…LPIV), 264-284 (TAPV…YALM), 298-318 (FAPL…LTSF), 335-355 (MGFV…GAML), 356-376 (QMIS…ATYD), 397-417 (FALW…SGFV), 438-458 (IVIA…LLSM), and 485-505 (VYII…PRLM).

Belongs to the complex I subunit 4 family.

The protein resides in the cellular thylakoid membrane. The enzyme catalyses a plastoquinone + NADH + (n+1) H(+)(in) = a plastoquinol + NAD(+) + n H(+)(out). The catalysed reaction is a plastoquinone + NADPH + (n+1) H(+)(in) = a plastoquinol + NADP(+) + n H(+)(out). Functionally, NDH-1 shuttles electrons from NAD(P)H, via FMN and iron-sulfur (Fe-S) centers, to quinones in the respiratory chain. The immediate electron acceptor for the enzyme in this species is believed to be plastoquinone. Couples the redox reaction to proton translocation (for every two electrons transferred, four hydrogen ions are translocated across the cytoplasmic membrane), and thus conserves the redox energy in a proton gradient. In Prochlorococcus marinus (strain MIT 9313), this protein is NAD(P)H-quinone oxidoreductase chain 4.